Reading from the N-terminus, the 403-residue chain is Ribonuclease T2-like (403 aa).

Residues 1-19 form the signal peptide; the sequence is MLALILTISICIFLKGSTC. Cystine bridges form between Cys36–Cys55, Cys44–Cys91, Cys54–Cys158, and Cys99–Cys150. An N-linked (GlcNAc...) asparagine glycan is attached at Asn78. Catalysis depends on residues His84, Glu143, and His147. Asn175 is a glycosylation site (N-linked (GlcNAc...) asparagine). A disulfide bridge connects residues Cys224 and Cys259. The segment at 268–288 is disordered; that stretch reads PKNGFNPGPQPPKSPRKGYLE.

This sequence belongs to the RNase T2 family.

The protein localises to the vacuole lumen. It localises to the cytoplasm. The enzyme catalyses a ribonucleotidyl-ribonucleotide-RNA + H2O = a 3'-end 3'-phospho-ribonucleotide-RNA + a 5'-end dephospho-ribonucleoside-RNA + H(+). Its function is as follows. Rnase which modulates cell survival under stress conditions. Released from the vacuole to the cytoplasm during stress to promote tRNA and rRNA cleavage and to activate separately a downstream pathway that promotes cell death. Involved in cell size, vacuolar morphology and growth at high temperatures and high salt concentration. The sequence is that of Ribonuclease T2-like (RNY1) from Debaryomyces hansenii (strain ATCC 36239 / CBS 767 / BCRC 21394 / JCM 1990 / NBRC 0083 / IGC 2968) (Yeast).